The primary structure comprises 79 residues: Putative defensin-like protein 309 (79 aa).

A signal peptide spans 1–19; the sequence is MKILAFFIFVLLIFSCSSS. 3 disulfide bridges follow: Cys31–Cys50, Cys37–Cys55, and Cys41–Cys57.

It belongs to the DEFL family.

Its subcellular location is the secreted. This is Putative defensin-like protein 309 from Arabidopsis thaliana (Mouse-ear cress).